Here is a 145-residue protein sequence, read N- to C-terminus: 3-hydroxyacyl-[acyl-carrier-protein] dehydratase FabZ (145 aa).

His-49 is an active-site residue.

Belongs to the thioester dehydratase family. FabZ subfamily.

It is found in the cytoplasm. It carries out the reaction a (3R)-hydroxyacyl-[ACP] = a (2E)-enoyl-[ACP] + H2O. Functionally, involved in unsaturated fatty acids biosynthesis. Catalyzes the dehydration of short chain beta-hydroxyacyl-ACPs and long chain saturated and unsaturated beta-hydroxyacyl-ACPs. The protein is 3-hydroxyacyl-[acyl-carrier-protein] dehydratase FabZ of Ehrlichia ruminantium (strain Gardel).